Reading from the N-terminus, the 315-residue chain is Gamma-hemolysin component C (315 aa).

The N-terminal stretch at 1 to 29 (MLKNKILATTLSVSLLAPLANPLLENAKA) is a signal peptide.

This sequence belongs to the aerolysin family. Toxicity requires sequential binding and synergistic association of a class S and a class F component which form heterooligomeric complexes. HlgC (class S) associates with HlgB (class F) thus forming an CB toxin.

Its function is as follows. Toxin that seems to act by forming pores in the membrane of the cell. Has a hemolytic and a leucotoxic activity. This is Gamma-hemolysin component C (hlgC) from Staphylococcus aureus (strain MSSA476).